We begin with the raw amino-acid sequence, 113 residues long: Phosphoribosyl-ATP pyrophosphatase (113 aa).

It belongs to the PRA-PH family.

Its subcellular location is the cytoplasm. It catalyses the reaction 1-(5-phospho-beta-D-ribosyl)-ATP + H2O = 1-(5-phospho-beta-D-ribosyl)-5'-AMP + diphosphate + H(+). Its pathway is amino-acid biosynthesis; L-histidine biosynthesis; L-histidine from 5-phospho-alpha-D-ribose 1-diphosphate: step 2/9. In Hydrogenovibrio crunogenus (strain DSM 25203 / XCL-2) (Thiomicrospira crunogena), this protein is Phosphoribosyl-ATP pyrophosphatase.